The chain runs to 247 residues: DNA polymerase sliding clamp (247 aa).

This sequence belongs to the PCNA family. Homotrimer. The subunits circularize to form a toroid; DNA passes through its center. Replication factor C (RFC) is required to load the toroid on the DNA.

In terms of biological role, sliding clamp subunit that acts as a moving platform for DNA processing. Responsible for tethering the catalytic subunit of DNA polymerase and other proteins to DNA during high-speed replication. This Haloarcula marismortui (strain ATCC 43049 / DSM 3752 / JCM 8966 / VKM B-1809) (Halobacterium marismortui) protein is DNA polymerase sliding clamp.